The chain runs to 283 residues: Probable endonuclease 4 (283 aa).

Zn(2+)-binding residues include H67, H107, E144, D178, H181, H215, D228, H230, and E260.

It belongs to the AP endonuclease 2 family. The cofactor is Zn(2+).

The catalysed reaction is Endonucleolytic cleavage to 5'-phosphooligonucleotide end-products.. Endonuclease IV plays a role in DNA repair. It cleaves phosphodiester bonds at apurinic or apyrimidinic (AP) sites, generating a 3'-hydroxyl group and a 5'-terminal sugar phosphate. In Citrifermentans bemidjiense (strain ATCC BAA-1014 / DSM 16622 / JCM 12645 / Bem) (Geobacter bemidjiensis), this protein is Probable endonuclease 4.